Reading from the N-terminus, the 223-residue chain is DNA mismatch repair protein MutH (223 aa).

Belongs to the MutH family.

It localises to the cytoplasm. Sequence-specific endonuclease that cleaves unmethylated GATC sequences. It is involved in DNA mismatch repair. The chain is DNA mismatch repair protein MutH from Haemophilus influenzae (strain 86-028NP).